Reading from the N-terminus, the 469-residue chain is MSALTPPTDMPTPTTDKITQAAMETIYLCKFRVSMDGEWLCLRELDDISLTPDPEPTHEDPNYLMANERMNLMNMAKLSIKGLIESALNLGRTLDSDYAPLQQFFVVMEHCLKHGLKAKKTFLGQNKSFWGPLELVEKLVPEAAEITASVKDLPGLKTPVGRGRAWLRLALMQKKLSEYMKALINKKELLSEFYEPNALMMEEEGAIIAGLLVGLNVIDANFCMKGEDLDSQVGVIDFSMYLKDGNSSKGTEGDGQITAILDQKNYVEELNRHLNATVNNLQAKVDALEKSNTKLTEELAVANNRIITLQEEMERVKEESSYILESNRKGPKQDRTAEGQALSEARKHLKEETQLRLDVEKELEMQISMRQEMELAMKMLEKDVCEKQDALVSLRQQLDDLRALKHELAFKLQSSDLGVKQKSELNSRLEEKTNQMAATIKQLEQSEKDLVKQAKTLNSAANKLIPKHH.

T5 and T12 each carry phosphothreonine. S34 and S49 each carry phosphoserine. T51 carries the post-translational modification Phosphothreonine. Residues 95–227 enclose the RUN domain; that stretch reads DSDYAPLQQF…IDANFCMKGE (133 aa). 2 coiled-coil regions span residues 271–362 and 422–463; these read NRHL…VEKE and KSEL…AANK.

Interacts with PAK1. Interacts (via C-terminus) with Ras-related Rab-5 proteins. Interacts (via C-terminus) with Ras-related Rap-2 proteins. Interacts with PIK3CA and PIK3R1. Interacts (via N-terminus) with FSCN1; this interaction induces neuron axon development. Interacts with DBN1. Interacts (via the second coiled coil) with GTP-, but not GDP-bound ARL8A and ARL8B. Interacts with dynactin/DCTN1 and the dynein intermediate chain DYNC1I1/2. Directly interacts with DYNC1LI1. Phosphorylated by PAK1. Isoform 1 is partially phosphorylated. As to expression, overexpressed in gastric cancer cells and tissues (at protein level).

Its subcellular location is the cytoplasm. It localises to the endomembrane system. It is found in the cell projection. The protein resides in the invadopodium. The protein localises to the perikaryon. Its subcellular location is the growth cone. It localises to the filopodium. It is found in the lamellipodium. The protein resides in the lysosome. Its function is as follows. ARL8 effector that promotes the coupling of endolysosomes to dynein-dynactin for retrograde transport along microtubules. Acts by binding both GTP-bound ARL8 and dynein-dynactin. In nonneuronal cells, promotes concentration of endolysosomes in the juxtanuclear area. In hippocampal neurons, drives retrograde transport of endolysosomes from the axon to the soma. Plays a role in the generation of neuronal polarity formation and axon growth. Implicated in the formation of a single axon by developing neurons. May inhibit the formation of additional axons by inhibition of PI3K in minor neuronal processes. Plays a role in the formation of F-actin-enriched protrusive structures at the cell periphery. Plays a role in cytoskeletal organization by regulating the subcellular localization of FSCN1 and DBN1 at axonal growth cones. The protein is Protein RUFY3 of Homo sapiens (Human).